Consider the following 560-residue polypeptide: Kinesin light chain 1 (560 aa).

Residues 27–156 adopt a coiled-coil conformation; the sequence is KTKQVIQGLE…HLEFMNQLKK (130 aa). Positions 156 to 176 are enriched in basic and acidic residues; the sequence is KYDDDISPSEDKDSDSSKEPL. The segment at 156 to 203 is disordered; it reads KYDDDISPSEDKDSDSSKEPLDDLFPNDEDDPGQGIQQQHSSAAAAAQ. The residue at position 162 (Ser162) is a Phosphoserine. Low complexity predominate over residues 188–203; that stretch reads GQGIQQQHSSAAAAAQ. 5 TPR repeats span residues 213 to 246, 255 to 288, 297 to 330, 339 to 372, and 381 to 414; these read LRTLHNLVIQYASQGRYEVAVPLCKQALEDLEKT, ATMLNILALVYRDQNKYKDAANLLNDALAIREKT, AATLNNLAVLYGKRGKYKEAEPLCKRALEIREKV, AKQLNNLALLCQNQGKYEEVEYYYQRALEIYQTK, and AKTKNNLASCYLKQGKFKQAETLYKEILTRAHER. Tyr449 is modified (phosphotyrosine). Residue Ser460 is modified to Phosphoserine. The stretch at 464–497 is one TPR 6 repeat; it reads TTTLKNLGALYRRQGKFEAAETLEEAALRSRKQG. Ser521 and Ser524 each carry phosphoserine.

The protein belongs to the kinesin light chain family. Oligomeric complex composed of two heavy chains and two light chains. Interacts with SPAG9. Interacts with ATCAY; may link mitochondria to KLC1 and regulate mitochondria localization into neuron projections. Interacts (via TPR repeats) with TOR1A; the interaction associates TOR1A with the kinesin oligomeric complex. Interacts with BORCS5. Interacts with MAPK8IP3/JIP3 and NTRK2/TRKB; interaction with NTRK2/TRKB is mediated by MAPK8IP3/JIP3. Interacts with CLSTN1; phosphorylation at Ser-460 inhibits interaction with CLSTN1. Post-translationally, phosphorylation at Ser-460 by ERK inhibits interaction with CLSTN1 and localization to cytoplasmic vesicles. Expressed in brain (at protein level).

It localises to the cell projection. The protein localises to the growth cone. It is found in the cytoplasmic vesicle. Its subcellular location is the cytoplasm. The protein resides in the cytoskeleton. In terms of biological role, kinesin is a microtubule-associated force-producing protein that may play a role in organelle transport. The light chain may function in coupling of cargo to the heavy chain or in the modulation of its ATPase activity. In Rattus norvegicus (Rat), this protein is Kinesin light chain 1 (Klc1).